A 232-amino-acid chain; its full sequence is Large ribosomal subunit protein uL1 (232 aa).

Belongs to the universal ribosomal protein uL1 family. As to quaternary structure, part of the 50S ribosomal subunit.

Binds directly to 23S rRNA. The L1 stalk is quite mobile in the ribosome, and is involved in E site tRNA release. Functionally, protein L1 is also a translational repressor protein, it controls the translation of the L11 operon by binding to its mRNA. This chain is Large ribosomal subunit protein uL1, found in Lysinibacillus sphaericus (strain C3-41).